The following is a 354-amino-acid chain: Photosystem II D2 protein (354 aa).

An N-acetylthreonine modification is found at Thr2. The residue at position 2 (Thr2) is a Phosphothreonine. Residues 42 to 62 (CAYFALGGWFTGTTFVTSWYT) traverse the membrane as a helical segment. His119 provides a ligand contact to chlorophyll a. A helical transmembrane segment spans residues 126–142 (GFMLRQFELARSVQLRP). Positions 131 and 144 each coordinate pheophytin a. A helical transmembrane segment spans residues 154-167 (VFVSVFLIYPLGQS). Residue His199 participates in chlorophyll a binding. Residues 209-229 (AALLCAIHGATVENTLFEDGD) traverse the membrane as a helical segment. A plastoquinone contacts are provided by His216 and Phe263. Fe cation is bound at residue His216. His270 is a binding site for Fe cation. A helical transmembrane segment spans residues 280–296 (GLWMSALGVVGLALNLR).

The protein belongs to the reaction center PufL/M/PsbA/D family. In terms of assembly, PSII is composed of 1 copy each of membrane proteins PsbA, PsbB, PsbC, PsbD, PsbE, PsbF, PsbH, PsbI, PsbJ, PsbK, PsbL, PsbM, PsbT, PsbX, PsbY, PsbZ, Psb30/Ycf12, at least 3 peripheral proteins of the oxygen-evolving complex and a large number of cofactors. It forms dimeric complexes. The D1/D2 heterodimer binds P680, chlorophylls that are the primary electron donor of PSII, and subsequent electron acceptors. It shares a non-heme iron and each subunit binds pheophytin, quinone, additional chlorophylls, carotenoids and lipids. There is also a Cl(-1) ion associated with D1 and D2, which is required for oxygen evolution. The PSII complex binds additional chlorophylls, carotenoids and specific lipids. serves as cofactor.

The protein resides in the plastid. The protein localises to the chloroplast thylakoid membrane. It catalyses the reaction 2 a plastoquinone + 4 hnu + 2 H2O = 2 a plastoquinol + O2. Its function is as follows. Photosystem II (PSII) is a light-driven water:plastoquinone oxidoreductase that uses light energy to abstract electrons from H(2)O, generating O(2) and a proton gradient subsequently used for ATP formation. It consists of a core antenna complex that captures photons, and an electron transfer chain that converts photonic excitation into a charge separation. The D1/D2 (PsbA/PsbD) reaction center heterodimer binds P680, the primary electron donor of PSII as well as several subsequent electron acceptors. D2 is needed for assembly of a stable PSII complex. This chain is Photosystem II D2 protein, found in Piper cenocladum (Ant piper).